We begin with the raw amino-acid sequence, 21 residues long: Japonicin-2 (21 aa).

Cys-14 and Cys-21 are oxidised to a cystine.

Expressed by the skin glands.

It localises to the secreted. In terms of biological role, antibacterial activity against the Gram-negative bacterium E.coli and the Gram-positive bacterium S.aureus. This is Japonicin-2 from Rana japonica (Japanese reddish frog).